A 548-amino-acid chain; its full sequence is T-complex protein 1 subunit alpha (548 aa).

This sequence belongs to the TCP-1 chaperonin family. Heterooligomeric complex of about 850 to 900 kDa that forms two stacked rings, 12 to 16 nm in diameter.

The protein localises to the cytoplasm. Molecular chaperone; assists the folding of proteins upon ATP hydrolysis. Known to play a role, in vitro, in the folding of actin and tubulin. This is T-complex protein 1 subunit alpha (tcp1) from Dictyostelium discoideum (Social amoeba).